The following is a 118-amino-acid chain: Mating-type P-specific polypeptide Pc (118 aa).

Residues 29-97 constitute a DNA-binding region (HMG box); the sequence is KTTIYKNGFM…VRKQIAKLER (69 aa).

It localises to the nucleus. Functionally, mating type proteins are sequence specific DNA-binding proteins that act as master switches in yeast differentiation by controlling gene expression in a cell type-specific fashion. Required for conjugation and efficient meiosis. This is Mating-type P-specific polypeptide Pc (matPc) from Schizosaccharomyces kambucha (Fission yeast).